Consider the following 303-residue polypeptide: MEFIINKINNIKNNNDNNNNINNNSNNNNNNNNNSNNNKFKFKYEFEFGYCYDVNLYEWRFIQDYETVPLKLNGILSNDEYNSILNIIGDVYDKTDKYPHVTYLLSIIMMVLLCMLPSVMAIHSNLNSYIQFVLFDDIFILITFILIPFLFFLKKKVIIENNYVIKGLKNRSIKLNIEYYKFKLLYFFFLLLWVPQGFLQSLIYKKRVLNEDFFNLKISLFILLGIDLIFILFAIWNFLLFTKLNRFLIKDRRDENILITLNSNIKKFLSPMEFYLTCNNTLNFFLNNNDNHFFPIDLDDPNV.

4 helical membrane passes run 102-122 (TYLLSIIMMVLLCMLPSVMAI), 132-152 (FVLFDDIFILITFILIPFLFF), 184-204 (LLYFFFLLLWVPQGFLQSLIY), and 221-241 (FILLGIDLIFILFAIWNFLLF).

It is found in the membrane. This is an uncharacterized protein from Dictyostelium discoideum (Social amoeba).